We begin with the raw amino-acid sequence, 796 residues long: Inactive dipeptidyl peptidase 10 (796 aa).

At 1 to 34 the chain is on the cytoplasmic side; that stretch reads MNQTASVSHHIKCQPSKTIKELGSNSPPQRNWKG. The segment at 1–55 is mediates effects on KCND2; the sequence is MNQTASVSHHIKCQPSKTIKELGSNSPPQRNWKGIAIALLVILVVCSLITMSVIL. The helical; Signal-anchor for type II membrane protein transmembrane segment at 35–55 threads the bilayer; that stretch reads IAIALLVILVVCSLITMSVIL. The Extracellular segment spans residues 56-796; the sequence is LTPDELTNSS…VLPQEPEEDE (741 aa). Residues asparagine 63, asparagine 90, asparagine 111, and asparagine 119 are each glycosylated (N-linked (GlcNAc...) asparagine). Residues tyrosine 138 and tyrosine 143 each carry the phosphotyrosine modification. Residues asparagine 257, asparagine 342, and asparagine 748 are each glycosylated (N-linked (GlcNAc...) asparagine).

It belongs to the peptidase S9B family. DPPIV subfamily. As to quaternary structure, may form oligomers. Interacts with KCND1. Interacts with KCND2. Identified in a complex with KCND2 and KCNIP3. Post-translationally, N-glycosylation is important for cell surface expression, specially at Asn-257, which is crucial. In terms of tissue distribution, detected in brain cortex, hippocampus, thalamus and cerebellum Purkinje cells (at protein level).

It localises to the cell membrane. Functionally, promotes cell surface expression of the potassium channel KCND2. Modulates the activity and gating characteristics of the potassium channel KCND2. Has no dipeptidyl aminopeptidase activity. This chain is Inactive dipeptidyl peptidase 10 (Dpp10), found in Rattus norvegicus (Rat).